A 516-amino-acid polypeptide reads, in one-letter code: Pickpocket protein 11 (516 aa).

2 helical membrane passes run 117–137 and 454–474; these read ILWW…VIMS and FIGT…VSVF.

It belongs to the amiloride-sensitive sodium channel (TC 1.A.6) family. Expressed in embryonic and larval tracheal systems in the dorsal trunk and transverse connective (TC), but not in the junction between the dorsal trunk and TC, and in several tracheal branches and terminal cells. In larvae, also expressed in ventral pits. Expressed in the taste-sensing terminal organ of the larval head. In adult, expressed in hairs on the tibia, femur, tarsi of the leg and wing margin.

The protein localises to the membrane. In terms of biological role, part of a complex that plays a role in tracheal liquid clearance. In both larvae and adults, contributes to the behavioral response to salt. Probable role in sodium transport. This chain is Pickpocket protein 11 (ppk11), found in Drosophila melanogaster (Fruit fly).